A 1412-amino-acid chain; its full sequence is DNA-directed RNA polymerase subunit beta'' (1412 aa).

The Zn(2+) site is built by Cys-220, Cys-294, Cys-301, and Cys-304.

This sequence belongs to the RNA polymerase beta' chain family. RpoC2 subfamily. In terms of assembly, in plastids the minimal PEP RNA polymerase catalytic core is composed of four subunits: alpha, beta, beta', and beta''. When a (nuclear-encoded) sigma factor is associated with the core the holoenzyme is formed, which can initiate transcription. Requires Zn(2+) as cofactor.

The protein resides in the plastid. It localises to the chloroplast. It catalyses the reaction RNA(n) + a ribonucleoside 5'-triphosphate = RNA(n+1) + diphosphate. Its function is as follows. DNA-dependent RNA polymerase catalyzes the transcription of DNA into RNA using the four ribonucleoside triphosphates as substrates. The protein is DNA-directed RNA polymerase subunit beta'' of Chara vulgaris (Common stonewort).